Here is a 948-residue protein sequence, read N- to C-terminus: MAEPLAVETKPLSNGNANGNAVGIAESASAVFQEKLKLQQQEESNEIAAVPKYGLKLKFDHVWPEKRIQNVRASIRQTLPMVPLVCRYAAYYWKVSREGRRVYMDYYYMENGKQIYGVPIGGIGGGTIGRGYAGEFCRFQMRPGIYEYNVVLANQFIVTIKDPKGCTIFQSLLSKCSTRDKTSDPDGDPDGERTKCQLPNCSSRAKQPLSAWHSNIEDTRCSYTGLYPRSWTEYDLSHYGVRLTCRQVSPVIPHEYRESSLPCAVFVWSVENVCDQERKVSITFTFKNGTGNKKQDAEGGAESQLISEGNAKGVSIRQKISEMPCSYNLACRVLPEISITRCPQFDPAGNGEQLWAQLKEHGQLSEHPTSEALKTKDIGVAVCGQVALKPMASHDLEFVLAWDMPKIQFPRKMQTHTRYYTKYFDDSGDSGPRICEYALRQYSTWERLIDAWQRPILNDETLPDWYKCAIFNQLYFISDGGTIWLKCDSSLGKELAYDDPRLAYGRFGYLEGHEYRMYNTYDVHFYASPALAHLWPNLQVSLQYDFKDAIAAELNDTRKMLYDGKVMPRKVKNCVPHDLGDPDEEPFTLINCYNIHDVNDWKDLNTKFVLQVYRDYYVLNELAQAQSDNASKFSSIEFIDKESLYELYSQDNKRKNSADEKQQNRKSASMYINETNGKVYLMDAIGYLKAMYASCKAIMERTIEYDKDNDGLIENTKMPDQTYDSWVMDGPSAYCSGLWLAALQAMSAMATILDQPNDCLRYQDILEKGKRSLEEKLWNGSYYRFDLSHSHRDTIMADQLCGHWYLKSCGFDYEIYPKENVRTALKRIYDNNVMGFHEGNIGAANGFIANASEPTKPGHVDNSNIQAEEVWPGVVYALAATMIQEGMFEEAFQTAGGMYKTLSQRIGMNFETPEALYGEKRYRSIGYMRPLSIWSMQVALERRRAQRD.

Topologically, residues 1–736 (MAEPLAVETK…VMDGPSAYCS (736 aa)) are extracellular. Residues 177 to 195 (STRDKTSDPDGDPDGERTK) are compositionally biased toward basic and acidic residues. Residues 177-197 (STRDKTSDPDGDPDGERTKCQ) form a disordered region. An N-linked (GlcNAc...) asparagine glycan is attached at asparagine 200. Phosphoserine is present on serine 214. N-linked (GlcNAc...) asparagine glycosylation is found at asparagine 288, asparagine 555, and asparagine 629. Residues serine 667 and serine 669 each carry the phosphoserine modification. A glycan (N-linked (GlcNAc...) asparagine) is linked at asparagine 673. The helical transmembrane segment at 737-753 (GLWLAALQAMSAMATIL) threads the bilayer. Topologically, residues 754–948 (DQPNDCLRYQ…ALERRRAQRD (195 aa)) are cytoplasmic.

Belongs to the non-lysosomal glucosylceramidase family.

It is found in the cell membrane. The enzyme catalyses a beta-D-glucosyl-(1&lt;-&gt;1')-N-acylsphing-4-enine + H2O = an N-acylsphing-4-enine + D-glucose. Its function is as follows. Non-lysosomal glucosylceramidase that catalyzes the conversion of glucosylceramide to free glucose and ceramide. The sequence is that of Non-lysosomal glucosylceramidase from Drosophila melanogaster (Fruit fly).